We begin with the raw amino-acid sequence, 271 residues long: Formamidopyrimidine-DNA glycosylase (271 aa).

The active-site Schiff-base intermediate with DNA is the Pro-2. The Proton donor role is filled by Glu-3. Lys-57 (proton donor; for beta-elimination activity) is an active-site residue. Positions 90, 109, and 151 each coordinate DNA. The FPG-type zinc-finger motif lies at 236-270 (HVYGRGGETCTECGHLLSEIRLGQRTTVFCSLCQT). Arg-260 functions as the Proton donor; for delta-elimination activity in the catalytic mechanism.

The protein belongs to the FPG family. In terms of assembly, monomer. It depends on Zn(2+) as a cofactor.

The enzyme catalyses Hydrolysis of DNA containing ring-opened 7-methylguanine residues, releasing 2,6-diamino-4-hydroxy-5-(N-methyl)formamidopyrimidine.. It catalyses the reaction 2'-deoxyribonucleotide-(2'-deoxyribose 5'-phosphate)-2'-deoxyribonucleotide-DNA = a 3'-end 2'-deoxyribonucleotide-(2,3-dehydro-2,3-deoxyribose 5'-phosphate)-DNA + a 5'-end 5'-phospho-2'-deoxyribonucleoside-DNA + H(+). Its function is as follows. Involved in base excision repair of DNA damaged by oxidation or by mutagenic agents. Acts as a DNA glycosylase that recognizes and removes damaged bases. Has a preference for oxidized purines, such as 7,8-dihydro-8-oxoguanine (8-oxoG). Has AP (apurinic/apyrimidinic) lyase activity and introduces nicks in the DNA strand. Cleaves the DNA backbone by beta-delta elimination to generate a single-strand break at the site of the removed base with both 3'- and 5'-phosphates. The protein is Formamidopyrimidine-DNA glycosylase of Shewanella amazonensis (strain ATCC BAA-1098 / SB2B).